The following is a 20-amino-acid chain: Agglutinin beta-2 chain (20 aa).

Residues 1–20 are disordered; sequence GRNGKSQSIIVGPWGDRVTN.

Belongs to the jacalin lectin family. In terms of assembly, formed of four alpha chains and four beta chains.

In terms of biological role, D-galactose-specific lectin, binds the T-antigen structure Gal-beta1,3-GalNAc. The protein is Agglutinin beta-2 chain of Maclura pomifera (Osage orange).